Consider the following 696-residue polypeptide: Glutamate-rich protein 6B (696 aa).

A compositionally biased stretch (polar residues) spans 1 to 10; the sequence is MSAENNQLSG. A disordered region spans residues 1–105; the sequence is MSAENNQLSG…EYLEKAGYLE (105 aa). Composition is skewed to acidic residues over residues 32–44 and 54–72; these read EDTE…ESLQ and ESLE…EEEE. Residues 73 to 91 show a composition bias toward basic and acidic residues; that stretch reads YLGKEEYLKEEEYLGKEEH.

This sequence belongs to the ERICH6 family.

This chain is Glutamate-rich protein 6B (ERICH6B), found in Homo sapiens (Human).